Reading from the N-terminus, the 684-residue chain is MSKKGTIGVTSDNIFPVIKKFLYSDHEIFLREIVSNAVDATQKLKTLTSVGEFKGETGDLRVTVSVDEVARTITVSDRGVGMTEEEVEKYINQIAFSSAEEFLEKYKDDKAAIIGHFGLGFYSAFMVSERVDVITRSFREDATAVKWSCDGSPEYTLEPADKADRGTDIVMHIDEENSEFLKKEKIEGLLGKYCKFLTVPIIFGKKQEWKDGKMQDTDEDNQINDTHPAWTKKPADLKDEDYKEFYRSLYPMSEEPLFWIHLNVDYPFNLTGILYFPKIKNNLDLQRNKIQLYCNQVYVTDEVQGIVPDFLTLLHGVIDSPDIPLNVSRSYLQSDANVKKISSHITKKVADRLEEIFKNDRPTFEEKWDSLKLFVEYGMLTDEKFYERAAKFFLFTDMDGHKYTFDEYRTLVEGVQTDKDGQVVYLYATDKHGQYSHVKRASDKGYSVMLLDGQLDPHIVSLLEQKLEKTHFVRVDSDTINNLIRKEERAEVKLSDTERATLVKLFEARLPRDEKKHFNVAFESLGAEGEAILITQAEFMRRMRDMAQLQPGMSFYGELPDSYNLVLNTDHPLIDRVLSGEKESVEPSLTELRAKIAELKAEEAKLLDEEKGKKPEEIPVATKEAKENNAVEQAKTEGSINDQLTKYAQDNELIGQLIDLALLGSGLLTGEALAEFIRRSQRLL.

The a; substrate-binding stretch occupies residues 1–329; the sequence is MSKKGTIGVT…SPDIPLNVSR (329 aa). The interval 330-548 is b; that stretch reads SYLQSDANVK…FMRRMRDMAQ (219 aa). Residues 549–684 form a c region; the sequence is LQPGMSFYGE…EFIRRSQRLL (136 aa).

This sequence belongs to the heat shock protein 90 family. In terms of assembly, homodimer.

Its subcellular location is the cytoplasm. Its function is as follows. Molecular chaperone. Has ATPase activity. The protein is Chaperone protein HtpG of Porphyromonas gingivalis (strain ATCC BAA-308 / W83).